We begin with the raw amino-acid sequence, 353 residues long: G-protein complex alpha subunit gpaA (353 aa).

Residues 1–25 form a disordered region; it reads MGCGMSTEDKEGKARNEEIENQLKR. Over residues 7–25 the composition is skewed to basic and acidic residues; sequence TEDKEGKARNEEIENQLKR. A G-alpha domain is found at 32–353; the sequence is NEIKMLLLGA…QENLRLCGLI (322 aa). The G1 motif stretch occupies residues 35–48; that stretch reads KMLLLGAGESGKST. A divalent metal cation-binding residues include Ser47 and Thr181. Positions 173–181 are G2 motif; sequence DVLRSRVKT. A G3 motif region spans residues 196–205; the sequence is YRMFDVGGQR. Positions 265–272 are G4 motif; sequence ILFLNKID. The interval 323–328 is G5 motif; it reads TCATDT.

Belongs to the G-alpha family. G(q) subfamily. G proteins are composed of 3 units; alpha, beta and gamma. The alpha chain contains the guanine nucleotide binding site. Interacts with gprM.

G-protein complex alpha subunit that plays a role in conidiation and regulation of the biosynthesis of secondary metabolites such as dihydroxynaphthalene (DHN)-melanin, via interaction with the G protein-coupled receptor gprM. This is G-protein complex alpha subunit gpaA from Aspergillus fumigatus (strain CBS 144.89 / FGSC A1163 / CEA10) (Neosartorya fumigata).